Consider the following 614-residue polypeptide: Leucine-rich repeat and immunoglobulin-like domain-containing nogo receptor-interacting protein 1 (614 aa).

A signal peptide spans 1–35 (MLAGGVRSMPSPLLACWQPILLLVLGSVLSGSATG). 2 disulfides stabilise this stretch: Cys-36/Cys-42 and Cys-40/Cys-51. The LRRNT domain occupies 36–65 (CPPRCECSAQDRAVLCHRKRFVAVPEGIPT). Over 36 to 555 (CPPRCECSAQ…FDIKTLIIAT (520 aa)) the chain is Extracellular. LRR repeat units lie at residues 66-87 (ETRL…EFAS), 90-111 (HLEE…AFNN), 114-135 (NLRT…VFTG), 138-159 (NLTK…MFQD), 162-183 (NLKS…AFSG), 186-207 (SLEQ…ALSH), 210-231 (GLIV…SFKR), 258-279 (NLTS…AVRH), 282-303 (YLRF…MLHE), 306-327 (RLQE…AFRG), and 330-351 (YLRV…VFHS). Asn-138 carries N-linked (GlcNAc...) asparagine glycosylation. Asn-196 carries an N-linked (GlcNAc...) asparagine glycan. Asn-258, Asn-268, and Asn-287 each carry an N-linked (GlcNAc...) asparagine glycan. Asn-335 carries an N-linked (GlcNAc...) asparagine glycan. One can recognise an LRRCT domain in the interval 363-417 (NPLACDCRLLWVFRRRWRLNFNRQQPTCATPEFVQGKEFKDFPDVLLPNYFTCRR). Intrachain disulfides connect Cys-367–Cys-390, Cys-369–Cys-415, and Cys-440–Cys-491. One can recognise an Ig-like C2-type domain in the interval 405 to 507 (PDVLLPNYFT…GNDSMPAHLH (103 aa)). Asn-486 and Asn-536 each carry an N-linked (GlcNAc...) asparagine glycan. A helical membrane pass occupies residues 556-576 (TMGFISFLGVVLFCLVLLFLW). The Cytoplasmic portion of the chain corresponds to 577-614 (SRGKGNTKHNIEIEYVPRKSDAGISSADAPRKFNMKMI). Ser-596 is modified (phosphoserine).

As to quaternary structure, homotetramer. Forms a ternary complex with RTN4R/NGFR and RTN4R/TNFRSF19. Interacts with NGRF, RTN4R and MYT1L. N-glycosylated. Contains predominantly high-mannose glycans.

It is found in the cell membrane. Functional component of the Nogo receptor signaling complex (RTN4R/NGFR) in RhoA activation responsible for some inhibition of axonal regeneration by myelin-associated factors. Is also an important negative regulator of oligodentrocyte differentiation and axonal myelination. Acts in conjunction with RTN4 and RTN4R in regulating neuronal precursor cell motility during cortical development. In Macaca fascicularis (Crab-eating macaque), this protein is Leucine-rich repeat and immunoglobulin-like domain-containing nogo receptor-interacting protein 1 (LINGO1).